A 155-amino-acid polypeptide reads, in one-letter code: MHCPFCAANDTKVIDSRLVAEGDQVRRRRECVACGERFTTFETAELVMPRLIKQDGSRQPFDEEKLRAGMQRALEKRPVSVERLEEAIARIKQQLRATGEREVKSLVLGELVMTELSKLDEVAYIRFASVYRRFQDLNEFREEIERLAREPSKSR.

Residues 3–34 (CPFCAANDTKVIDSRLVAEGDQVRRRRECVAC) fold into a zinc finger. An ATP-cone domain is found at 49-139 (PRLIKQDGSR…VYRRFQDLNE (91 aa)).

This sequence belongs to the NrdR family. It depends on Zn(2+) as a cofactor.

In terms of biological role, negatively regulates transcription of bacterial ribonucleotide reductase nrd genes and operons by binding to NrdR-boxes. The polypeptide is Transcriptional repressor NrdR (Ectopseudomonas mendocina (strain ymp) (Pseudomonas mendocina)).